Reading from the N-terminus, the 86-residue chain is Thioredoxin (86 aa).

Residues Cys15 and Cys18 each act as nucleophile in the active site. A disulfide bond links Cys15 and Cys18.

The protein belongs to the glutaredoxin family.

Does not function as a glutathione-disulfide oxidoreductase in the presence of glutathione and glutathione reductase. Has low thioredoxin activity in vitro. The sequence is that of Thioredoxin from Methanocaldococcus jannaschii (strain ATCC 43067 / DSM 2661 / JAL-1 / JCM 10045 / NBRC 100440) (Methanococcus jannaschii).